The chain runs to 193 residues: Biphenyl dioxygenase subunit beta (193 aa).

It belongs to the bacterial ring-hydroxylating dioxygenase beta subunit family. In terms of assembly, heterohexamer consisting of 3 BphA1 subunits and 3 BphA2 subunits. A ferredoxin (BphA3) and a ferredoxin reductase (BphA4) must be present to obtain activity.

The enzyme catalyses biphenyl + NADH + O2 + H(+) = (2R,3S)-3-phenylcyclohexa-3,5-diene-1,2-diol + NAD(+). The protein operates within xenobiotic degradation; biphenyl degradation; 2-hydroxy-2,4-pentadienoate and benzoate from biphenyl: step 1/4. Its function is as follows. The beta subunit may be responsible for the substrate specificity of the enzyme. The sequence is that of Biphenyl dioxygenase subunit beta (bphA2) from Pseudomonas sp. (strain KKS102).